A 312-amino-acid chain; its full sequence is Ribonuclease Z (312 aa).

H63, H65, D67, H68, H140, D211, and H269 together coordinate Zn(2+). D67 serves as the catalytic Proton acceptor.

Belongs to the RNase Z family. Homodimer. Zn(2+) is required as a cofactor.

The catalysed reaction is Endonucleolytic cleavage of RNA, removing extra 3' nucleotides from tRNA precursor, generating 3' termini of tRNAs. A 3'-hydroxy group is left at the tRNA terminus and a 5'-phosphoryl group is left at the trailer molecule.. Functionally, zinc phosphodiesterase, which displays some tRNA 3'-processing endonuclease activity. Probably involved in tRNA maturation, by removing a 3'-trailer from precursor tRNA. In Anoxybacillus flavithermus (strain DSM 21510 / WK1), this protein is Ribonuclease Z.